The following is a 223-amino-acid chain: Probable transaldolase (223 aa).

Lys86 (schiff-base intermediate with substrate) is an active-site residue.

The protein belongs to the transaldolase family. Type 3B subfamily.

The protein localises to the cytoplasm. The catalysed reaction is D-sedoheptulose 7-phosphate + D-glyceraldehyde 3-phosphate = D-erythrose 4-phosphate + beta-D-fructose 6-phosphate. The protein operates within carbohydrate degradation; pentose phosphate pathway; D-glyceraldehyde 3-phosphate and beta-D-fructose 6-phosphate from D-ribose 5-phosphate and D-xylulose 5-phosphate (non-oxidative stage): step 2/3. Its function is as follows. Transaldolase is important for the balance of metabolites in the pentose-phosphate pathway. The sequence is that of Probable transaldolase (tal) from Thermoplasma volcanium (strain ATCC 51530 / DSM 4299 / JCM 9571 / NBRC 15438 / GSS1).